The following is a 79-amino-acid chain: Small ribosomal subunit protein bS18 (79 aa).

Belongs to the bacterial ribosomal protein bS18 family. In terms of assembly, part of the 30S ribosomal subunit. Forms a tight heterodimer with protein bS6.

Binds as a heterodimer with protein bS6 to the central domain of the 16S rRNA, where it helps stabilize the platform of the 30S subunit. In Rhodopseudomonas palustris (strain BisB18), this protein is Small ribosomal subunit protein bS18.